Here is a 95-residue protein sequence, read N- to C-terminus: Costars family protein At4g33640 (95 aa).

Position 1 is an N-acetylmethionine (methionine 1).

Belongs to the costars family.

The sequence is that of Costars family protein At4g33640 from Arabidopsis thaliana (Mouse-ear cress).